Consider the following 138-residue polypeptide: Host cell factor C1 regulator 1 (138 aa).

The interaction with HCFC1 stretch occupies residues 76–79; that stretch reads DHPY. The Nuclear export signal signature appears at 110–119; it reads IPEALRLLRL.

As to quaternary structure, interacts with HCFC1. In terms of tissue distribution, widely expressed.

It localises to the cytoplasm. The protein resides in the nucleus. In terms of biological role, regulates HCFC1 activity by modulating its subcellular localization. Overexpression of HCFC1R1 leads to accumulation of HCFC1 in the cytoplasm. HCFC1R1-mediated export may provide the pool of cytoplasmic HCFC1 required for import of virion-derived VP16 into the nucleus. This is Host cell factor C1 regulator 1 (HCFC1R1) from Homo sapiens (Human).